A 142-amino-acid chain; its full sequence is Baculoviral IAP repeat-containing protein 5 (142 aa).

Residues 18-88 (RIYTFKNWPF…KHSPGCAFLT (71 aa)) form a BIR repeat. Position 23 is an N6-acetyllysine (lysine 23). Phosphothreonine; by CDK1 and CDK15 is present on threonine 34. A Phosphothreonine modification is found at threonine 48. Residues cysteine 57, cysteine 60, histidine 77, and cysteine 84 each contribute to the Zn(2+) site. 4 positions are modified to N6-acetyllysine: lysine 90, lysine 110, lysine 112, and lysine 115. At threonine 117 the chain carries Phosphothreonine; by AURKB.

This sequence belongs to the IAP family. As to quaternary structure, monomer or homodimer. Exists as a homodimer in the apo state and as a monomer in the CPC-bound state. The monomer protects cells against apoptosis more efficiently than the dimer. Only the dimeric form is capable of enhancing tubulin stability in cells. When phosphorylated, interacts with LAMTOR5/HBXIP; the resulting complex binds pro-CASP9, as well as active CASP9, but much less efficiently. Component of the chromosomal passenger complex (CPC) composed of at least BIRC5/survivin, CDCA8/borealin, INCENP, AURKB or AURKC; in the complex forms a triple-helix bundle-based subcomplex with INCENP and CDCA8. Interacts with JTB. Interacts (via BIR domain) with histone H3 phosphorylated at 'Thr-3' (H3pT3). Interacts with EVI5. Interacts with GTP-bound RAN in both the S and M phases of the cell cycle. Interacts with USP9X. Interacts with tubulin. Interacts with BIRC2/c-IAP1. The monomeric form interacts with XIAP/BIRC4. Both the dimeric and monomeric form can interact with DIABLO/SMAC. Interacts with BIRC6/bruce. Interacts with FBXL7; this interaction facilitates the polyubiquitination and subsequent proteasomal degradation of BIRC5 by the SCF(FBXL7) E3 ubiquitin-protein ligase complex. Post-translationally, ubiquitinated by the Cul9-RING ubiquitin-protein ligase complex, leading to its degradation. Ubiquitination is required for centrosomal targeting. Deubiquitinated by USP35 or USP38; leading to stabilization. In terms of processing, in vitro phosphorylation at Thr-117 by AURKB prevents interaction with INCENP and localization to mitotic chromosomes. Phosphorylation at Thr-48 by CK2 is critical for its mitotic and anti-apoptotic activities. Phosphorylation at Thr-34 by CDK15 is critical for its anti-apoptotic activity.

The protein localises to the cytoplasm. Its subcellular location is the nucleus. The protein resides in the chromosome. It is found in the centromere. It localises to the cytoskeleton. The protein localises to the spindle. Its subcellular location is the kinetochore. The protein resides in the midbody. Its function is as follows. Multitasking protein that has dual roles in promoting cell proliferation and preventing apoptosis. Component of a chromosome passage protein complex (CPC) which is essential for chromosome alignment and segregation during mitosis and cytokinesis. Acts as an important regulator of the localization of this complex; directs CPC movement to different locations from the inner centromere during prometaphase to midbody during cytokinesis and participates in the organization of the center spindle by associating with polymerized microtubules. Involved in the recruitment of CPC to centromeres during early mitosis via association with histone H3 phosphorylated at 'Thr-3' (H3pT3) during mitosis. The complex with RAN plays a role in mitotic spindle formation by serving as a physical scaffold to help deliver the RAN effector molecule TPX2 to microtubules. May counteract a default induction of apoptosis in G2/M phase. The acetylated form represses STAT3 transactivation of target gene promoters. May play a role in neoplasia. Inhibitor of CASP3 and CASP7. Essential for the maintenance of mitochondrial integrity and function. In Rattus norvegicus (Rat), this protein is Baculoviral IAP repeat-containing protein 5 (Birc5).